Reading from the N-terminus, the 357-residue chain is tRNA N6-adenosine threonylcarbamoyltransferase (357 aa).

The Fe cation site is built by His-115 and His-119. Residues 137–141 (LASGG), Asp-170, Gly-183, and Asn-281 each bind substrate. Asp-309 provides a ligand contact to Fe cation.

The protein belongs to the KAE1 / TsaD family. Fe(2+) is required as a cofactor.

It localises to the cytoplasm. The enzyme catalyses L-threonylcarbamoyladenylate + adenosine(37) in tRNA = N(6)-L-threonylcarbamoyladenosine(37) in tRNA + AMP + H(+). In terms of biological role, required for the formation of a threonylcarbamoyl group on adenosine at position 37 (t(6)A37) in tRNAs that read codons beginning with adenine. Is involved in the transfer of the threonylcarbamoyl moiety of threonylcarbamoyl-AMP (TC-AMP) to the N6 group of A37, together with TsaE and TsaB. TsaD likely plays a direct catalytic role in this reaction. In Bradyrhizobium diazoefficiens (strain JCM 10833 / BCRC 13528 / IAM 13628 / NBRC 14792 / USDA 110), this protein is tRNA N6-adenosine threonylcarbamoyltransferase.